Consider the following 377-residue polypeptide: Spermidine/putrescine import ATP-binding protein PotA (377 aa).

One can recognise an ABC transporter domain in the interval 18–248 (IRLSGISKSF…PKNLFVARFI (231 aa)). 50 to 57 (GPSGCGKT) lines the ATP pocket.

Belongs to the ABC transporter superfamily. Spermidine/putrescine importer (TC 3.A.1.11.1) family. As to quaternary structure, the complex is composed of two ATP-binding proteins (PotA), two transmembrane proteins (PotB and PotC) and a solute-binding protein (PotD).

It localises to the cell inner membrane. The enzyme catalyses ATP + H2O + polyamine-[polyamine-binding protein]Side 1 = ADP + phosphate + polyamineSide 2 + [polyamine-binding protein]Side 1.. In terms of biological role, part of the ABC transporter complex PotABCD involved in spermidine/putrescine import. Responsible for energy coupling to the transport system. The chain is Spermidine/putrescine import ATP-binding protein PotA from Vibrio cholerae serotype O1 (strain ATCC 39315 / El Tor Inaba N16961).